The primary structure comprises 141 residues: Large ribosomal subunit protein uL11 (141 aa).

It belongs to the universal ribosomal protein uL11 family. In terms of assembly, part of the ribosomal stalk of the 50S ribosomal subunit. Interacts with L10 and the large rRNA to form the base of the stalk. L10 forms an elongated spine to which L12 dimers bind in a sequential fashion forming a multimeric L10(L12)X complex. Post-translationally, one or more lysine residues are methylated.

Functionally, forms part of the ribosomal stalk which helps the ribosome interact with GTP-bound translation factors. The protein is Large ribosomal subunit protein uL11 of Ligilactobacillus salivarius (strain UCC118) (Lactobacillus salivarius).